A 144-amino-acid chain; its full sequence is Leghemoglobin-1 (144 aa).

The region spanning 2 to 144 (GFTEKQEALV…DGLATAIKAA (143 aa)) is the Globin domain. Residues tyrosine 25 and tyrosine 30 each carry the nitrated tyrosine modification. Serine 45 serves as a coordination point for heme b. Position 45 is a phosphoserine (serine 45). Histidine 62 contacts O2. Heme b contacts are provided by lysine 65, histidine 93, and lysine 96. Tyrosine 134 bears the Nitrated tyrosine mark.

The protein belongs to the plant globin family. In terms of assembly, monomer. In terms of processing, nitrated in effective nodules and particularly in hypoxic conditions; this mechanism may play a protective role in the symbiosis by buffering toxic peroxynitrite NO(2)(-). Nitration level decrease during nodule senescence. Post-translationally, phosphorylation at Ser-45 disrupts the molecular environment of its porphyrin ring oxygen binding pocket, thus leading to a reduced oxygen consumption and to the delivery of oxygen O(2) to symbiosomes. As to expression, root nodules.

The protein resides in the cytoplasm. Its subcellular location is the cytosol. It localises to the nucleus. Its function is as follows. Leghemoglobin that reversibly binds oxygen O(2) through a pentacoordinated heme iron. In root nodules, facilitates the diffusion of oxygen to the bacteroids while preventing the bacterial nitrogenase from being inactivated by buffering dioxygen, nitric oxide and carbon monoxide, and promoting the formation of reactive oxygen species (ROS, e.g. H(2)O(2)). This role is essential for symbiotic nitrogen fixation (SNF). The chain is Leghemoglobin-1 from Vicia faba (Broad bean).